Consider the following 95-residue polypeptide: Glycophorin-C (95 aa).

At 1–25 (MSSPVRTPPPERLEPNPGMSYAVME) the chain is on the extracellular side. Residues 26-46 (IAIIAAVITAVALVLVCLLFL) form a helical; Signal-anchor for type III membrane protein membrane-spanning segment. Over 47-95 (MLRYLYRHKGTYYTNEAKGTEFAESADAALQSDPALQDAGDTSKKEYFI) the chain is Cytoplasmic. A phosphoserine mark is found at S71, S78, and S89.

The protein belongs to the glycophorin-C family.

It localises to the cell membrane. The polypeptide is Glycophorin-C (Gypc) (Rattus norvegicus (Rat)).